The chain runs to 296 residues: Nucleotide-binding protein Rmet_0297 (296 aa).

8 to 15 (GISGSGKS) is a binding site for ATP. 57 to 60 (DIRS) serves as a coordination point for GTP.

The protein belongs to the RapZ-like family.

In terms of biological role, displays ATPase and GTPase activities. In Cupriavidus metallidurans (strain ATCC 43123 / DSM 2839 / NBRC 102507 / CH34) (Ralstonia metallidurans), this protein is Nucleotide-binding protein Rmet_0297.